We begin with the raw amino-acid sequence, 247 residues long: 2,3-bisphosphoglycerate-dependent phosphoglycerate mutase (247 aa).

Substrate is bound by residues 8–15 (RHGESTWN), 21–22 (TG), Arg-60, 87–90 (ERHY), Lys-98, 114–115 (RR), and 183–184 (GN). His-9 (tele-phosphohistidine intermediate) is an active-site residue. The active-site Proton donor/acceptor is the Glu-87.

The protein belongs to the phosphoglycerate mutase family. BPG-dependent PGAM subfamily. Homodimer.

It catalyses the reaction (2R)-2-phosphoglycerate = (2R)-3-phosphoglycerate. The protein operates within carbohydrate degradation; glycolysis; pyruvate from D-glyceraldehyde 3-phosphate: step 3/5. In terms of biological role, catalyzes the interconversion of 2-phosphoglycerate and 3-phosphoglycerate. In Acidovorax sp. (strain JS42), this protein is 2,3-bisphosphoglycerate-dependent phosphoglycerate mutase.